Consider the following 126-residue polypeptide: Profilin-1A (126 aa).

Residues 2–36 (SWQTYVDTNLVGTGAVTQAAILGLDGNTWATSAGF) are actin binding. K104 is modified (N6,N6,N6-trimethyllysine).

The protein belongs to the profilin family. As to quaternary structure, occurs in many kinds of cells as a complex with monomeric actin in a 1:1 ratio.

Its subcellular location is the cytoplasm. It is found in the cytoskeleton. Functionally, binds to actin and affects the structure of the cytoskeleton. At high concentrations, profilin prevents the polymerization of actin, whereas it enhances it at low concentrations. By binding to PIP2, it inhibits the formation of IP3 and DG. This is Profilin-1A from Acanthamoeba castellanii (Amoeba).